Reading from the N-terminus, the 300-residue chain is MLDLYPVQNLTVDQLEYEKNTRFLQPAWDWIKNGNEHILSSPLFPPFYALSIDYTWVAVFTFIDVFLCNVPFFKDAKIQKDRKVTWDLIKKSLKLQGWNQLLWIYPMALVQLIWVPDTELPILAPTVFEMLSQLAIFFLAFDFTYFWFHYINHKVKWLYRWCHSVHHMYSSPFAASAQHLHPFELFFVGTFITTIPWIFPTHCLTYWIWFFIAQSVSYEVHIGYDFPFALHRIFWFYSGAPAHDMHHLRPLTCFQPWFNYLDRLMGYHITYADLKKMTEAKFKKFGLYSAEDEKGLIKIN.

N9 is a glycosylation site (N-linked (GlcNAc...) asparagine). 3 helical membrane-spanning segments follow: residues 54-73 (YTWVAVFTFIDVFLCNVPFF), 95-115 (LQGWNQLLWIYPMALVQLIWV), and 130-152 (MLSQLAIFFLAFDFTYFWFHYIN). The region spanning 135–266 (AIFFLAFDFT…WFNYLDRLMG (132 aa)) is the Fatty acid hydroxylase domain. Residues 148 to 152 (FHYIN) carry the Histidine box-1 motif. The Histidine box-2 motif lies at 163-167 (HSVHH). A helical membrane pass occupies residues 192-212 (ITTIPWIFPTHCLTYWIWFFI). The Histidine box-3 motif lies at 242–248 (AHDMHHL).

The protein belongs to the sterol desaturase family. Fe cation is required as a cofactor.

Its subcellular location is the membrane. Its function is as follows. Probable sterol desaturase. In Caenorhabditis elegans, this protein is Cholesterol 25-hydroxylase-like protein.